The sequence spans 365 residues: MHLNAIAISAFRNIDHVEISFDRRFNVLHGANGQGKTSVLEAIYLLGTMKSFRMAKAHDLIAWNAPHSLVRGDIDKAGVRREIALYLGREGRKARIDRKPVTKLADFFGAVNAVVFSPEEIGMARGGPELRRRYLDRAIFNGDLGYLLLHHEYHRLLKQRNALLRRGERDGLEVWTIQLAEAGARLMVKRRAYLSQIEPLVRQFYRDIAGAGQEVGLAYRCHGLASAEGERDCAAALRELMAAHEAEELRRGATGVGPHRDDVDFILNGRVIRHHGSQGEQRSFVLAVKMAEIEYLERLNGAPPVLLLDDISSELDPERNANLMTFLRGKRMQVFITTTDVSTLRLEGIDTHASFRVSRGTVTPV.

ATP is bound at residue 30-37; sequence GANGQGKT.

This sequence belongs to the RecF family.

It localises to the cytoplasm. The RecF protein is involved in DNA metabolism; it is required for DNA replication and normal SOS inducibility. RecF binds preferentially to single-stranded, linear DNA. It also seems to bind ATP. This Geobacter sulfurreducens (strain ATCC 51573 / DSM 12127 / PCA) protein is DNA replication and repair protein RecF.